We begin with the raw amino-acid sequence, 109 residues long: Nucleoid-associated protein ECA1177 (109 aa).

The protein belongs to the YbaB/EbfC family. As to quaternary structure, homodimer.

It is found in the cytoplasm. The protein localises to the nucleoid. Its function is as follows. Binds to DNA and alters its conformation. May be involved in regulation of gene expression, nucleoid organization and DNA protection. The protein is Nucleoid-associated protein ECA1177 of Pectobacterium atrosepticum (strain SCRI 1043 / ATCC BAA-672) (Erwinia carotovora subsp. atroseptica).